The following is a 656-amino-acid chain: MLFKLVTFSRPIQITQTIPLLISQSRRTIARSLSTTSRWLASDDDDTRFDQIPVQRIRNFSIIAHVDHGKSTLADRLLELTGTIAKKAGNKQVLDSLQVEKERGITVKAQTASLVYPYEGETYLLNLIDTPGHVDFSNEVSRSLAACDGVILLVDANEGVQAQTVANFHLARAKQLVIVPVLNKIDLKNARPDAVAQELFTLFEIDPDEVLRISAKIGTGCDAVLKEIVRRLPPPDARREQNFRALIFDSWFDRYRGALNLVFVKDGEIRTGQEIVSCHTGKAYEVKSLAMLRPDERKVDRLVAGQVGLLGCNMRTSKESNIGDTLYAKKDKTCVPLPGFKPQQPMVFAGVYPADQSQHPYLKSAIEKLVLNDSAVTVSPDSSPALGQGWRLGFLGLLHLDVFSQRLQQEYDADPILTAPSVTYRIKLKGAKIIAAHGGNEEIYVSNPALFPDKTMVEEYYEPYVLGTIIAPTECTGPIIGLCVERRAIQKTSINIDNDRIMTTYLMPLNEIVLDFHDQLKSISSGYASFDYEDHGYVPSALVRMDILLNGQLVDELCTVVHISKAQSHAKELVLKLKELIPRQMVQIAIQAVVGGKVVARETLKAYRKDVTSKLYGGDVTRRMKLLKQQSEGKKKMRAIANINVPKDTFINVLKR.

The region spanning 55-236 (QRIRNFSIIA…EIVRRLPPPD (182 aa)) is the tr-type G domain. GTP is bound by residues 64-71 (AHVDHGKS), 129-133 (DTPGH), and 183-186 (NKID).

Belongs to the TRAFAC class translation factor GTPase superfamily. Classic translation factor GTPase family. LepA subfamily.

It is found in the mitochondrion inner membrane. It carries out the reaction GTP + H2O = GDP + phosphate + H(+). Its function is as follows. Promotes mitochondrial protein synthesis. May act as a fidelity factor of the translation reaction, by catalyzing a one-codon backward translocation of tRNAs on improperly translocated ribosomes. Binds to mitochondrial ribosomes in a GTP-dependent manner. This Aedes aegypti (Yellowfever mosquito) protein is Translation factor GUF1 homolog, mitochondrial.